The chain runs to 290 residues: Protein translocase subunit SecF (290 aa).

6 consecutive transmembrane segments (helical) span residues 15-35 (VFMILSLLFVIIGMYFFFTKG), 131-151 (KAILAAVLAIIVMLVYITVRF), 156-176 (AISAIINEAFVLLATISIFAI), 184-204 (SFIAAILTLLGYAINDNIIVF), 234-256 (TLYTVITTLLAITPLLIWGGVVL), and 260-282 (ILAIYLGIIIGTYSTIYIASAIL).

Belongs to the SecD/SecF family. SecF subfamily. As to quaternary structure, forms a complex with SecD. Part of the essential Sec protein translocation apparatus which comprises SecA, SecYEG and auxiliary proteins SecDF. Other proteins may also be involved.

The protein localises to the cell inner membrane. Part of the Sec protein translocase complex. Interacts with the SecYEG preprotein conducting channel. SecDF uses the proton motive force (PMF) to complete protein translocation after the ATP-dependent function of SecA. This chain is Protein translocase subunit SecF, found in Dictyoglomus turgidum (strain DSM 6724 / Z-1310).